The chain runs to 292 residues: Elongation factor Ts (292 aa).

The segment at 82 to 85 (TDFV) is involved in Mg(2+) ion dislocation from EF-Tu.

It belongs to the EF-Ts family.

The protein resides in the cytoplasm. Functionally, associates with the EF-Tu.GDP complex and induces the exchange of GDP to GTP. It remains bound to the aminoacyl-tRNA.EF-Tu.GTP complex up to the GTP hydrolysis stage on the ribosome. This Legionella pneumophila (strain Lens) protein is Elongation factor Ts.